A 450-amino-acid polypeptide reads, in one-letter code: Sensor histidine kinase EnvZ (450 aa).

At 1–15 the chain is on the cytoplasmic side; it reads MRRMRFSPRSSFART. A helical transmembrane segment spans residues 16 to 35; the sequence is LLLIVTLLFVSLVTTYLVVL. The Periplasmic segment spans residues 36–158; it reads NFAILPSLQQ…LTEIHQGDFS (123 aa). A helical membrane pass occupies residues 159–179; the sequence is PLFRYTLAIMLLAIGGAWLFI. The HAMP domain maps to 180 to 232; it reads RIQNRPLVDLEHAALQVGKGIIPPPLREYGASEVRSVTRAFNHMAAGVKQLAD. Topologically, residues 180–450 are cytoplasmic; the sequence is RIQNRPLVDL…ARVQGTTKEA (271 aa). Residues 223 to 289 form a cytoplasmic dimerization domain (CDD), when dimerized forms osmosensitive core region; that stretch reads MAAGVKQLAD…IIEQFIDYLR (67 aa). Residues 240-440 form the Histidine kinase domain; the sequence is GVSHDLRTPL…SIRAWLPVPV (201 aa). Residues His243, 347–351, Asp373, 392–393, and 402–406 each bind ATP; these read NAARY, RG, and TGLGL. His243 carries the phosphohistidine; by autocatalysis modification.

Homodimer. In terms of processing, autophosphorylated.

It localises to the cell inner membrane. It carries out the reaction ATP + protein L-histidine = ADP + protein N-phospho-L-histidine.. Member of the two-component regulatory system EnvZ/OmpR involved in regulating expression of the outer membrane porins OmpC and OmpF as well as other genes. Unlike E.coli or S.typhimurium both porins are expressed constitutively. Involved in regulation of the biosynthesis of Vi polysaccharide, a capsular antigen thought to be involved in the virulence of S.typhi. Vi antigen is synthesized at low NaCl concentrations (under 0.4 M). EnvZ functions as a membrane-associated protein kinase that phosphorylates OmpR in response to environmental signals. In Salmonella typhi, this protein is Sensor histidine kinase EnvZ (envZ).